The sequence spans 173 residues: Adenine phosphoribosyltransferase (173 aa).

Belongs to the purine/pyrimidine phosphoribosyltransferase family. In terms of assembly, homodimer.

It localises to the cytoplasm. The catalysed reaction is AMP + diphosphate = 5-phospho-alpha-D-ribose 1-diphosphate + adenine. The protein operates within purine metabolism; AMP biosynthesis via salvage pathway; AMP from adenine: step 1/1. In terms of biological role, catalyzes a salvage reaction resulting in the formation of AMP, that is energically less costly than de novo synthesis. The polypeptide is Adenine phosphoribosyltransferase (Chloroflexus aurantiacus (strain ATCC 29366 / DSM 635 / J-10-fl)).